A 66-amino-acid chain; its full sequence is Gallinacin-8 (66 aa).

The first 19 residues, 1 to 19 (MKILYLLLAVLLTVLQSSL), serve as a signal peptide directing secretion. A propeptide spanning residues 20–25 (GFMRVP) is cleaved from the precursor. 3 disulfide bridges follow: cysteine 31/cysteine 60, cysteine 38/cysteine 54, and cysteine 43/cysteine 61.

Belongs to the beta-defensin family. As to expression, expressed in the liver, kidney, gall bladder, testis, ovary and male and femae reproductive tracts. Expressed in the ovarian stroma and the theca and granulosa layers of the ovarian follicle.

The protein resides in the secreted. Its subcellular location is the cytoplasmic granule. Its function is as follows. Has bactericidal activity. The sequence is that of Gallinacin-8 (GAL8) from Gallus gallus (Chicken).